The sequence spans 1037 residues: Glycine dehydrogenase (decarboxylating) 1, mitochondrial (1037 aa).

The transit peptide at 1–67 (MERARRLAYR…AFGRHQQTRS (67 aa)) directs the protein to the mitochondrion. C98 bears the S-glutathionyl cysteine; transient mark. 2 positions are modified to S-glutathionyl cysteine: C402 and C463. K774 is subject to N6-(pyridoxal phosphate)lysine. Residues C777, C943, and C1022 each carry the S-glutathionyl cysteine; transient modification.

The protein belongs to the GcvP family. As to quaternary structure, homodimer. The glycine cleavage system is composed of four proteins: P, T, L and H. Requires pyridoxal 5'-phosphate as cofactor. Glutathionylated at Cys-98, Cys-777, Cys-943 and Cys-1022 after S-nitrosoglutathione treatment. In terms of processing, S-nitrosylated at unknown positions by nitric oxide. As to expression, expressed in leaves. Detected in roots, stems, flowers and siliques.

It is found in the mitochondrion. The catalysed reaction is N(6)-[(R)-lipoyl]-L-lysyl-[glycine-cleavage complex H protein] + glycine + H(+) = N(6)-[(R)-S(8)-aminomethyldihydrolipoyl]-L-lysyl-[glycine-cleavage complex H protein] + CO2. With respect to regulation, inhibited by harpin, S-nitrosoglutathione (GSNO), nitric oxide, N-ethylmaleimide and 5,5'-dithiobis-(2-nitrobenzoic acid). In terms of biological role, the glycine decarboxylase (GDC) or glycine cleavage system catalyzes the degradation of glycine. The P protein binds the alpha-amino group of glycine through its pyridoxal phosphate cofactor; CO(2) is released and the remaining methylamine moiety is then transferred to the lipoamide cofactor of the H protein. This Arabidopsis thaliana (Mouse-ear cress) protein is Glycine dehydrogenase (decarboxylating) 1, mitochondrial (GLDP1).